A 124-amino-acid polypeptide reads, in one-letter code: Small ribosomal subunit protein uS11 (124 aa).

The interval 102–124 (RIGRIEDATPIPHDGTTPKRKNR) is disordered.

It belongs to the universal ribosomal protein uS11 family. As to quaternary structure, part of the 30S ribosomal subunit.

Its function is as follows. Located on the platform of the 30S subunit. The chain is Small ribosomal subunit protein uS11 from Methanococcus maripaludis (strain C5 / ATCC BAA-1333).